Reading from the N-terminus, the 119-residue chain is Small ribosomal subunit protein bS16 (119 aa).

Residues 89–103 are compositionally biased toward basic and acidic residues; that stretch reads TTKSTKEKAATDKKA. Residues 89 to 119 form a disordered region; it reads TTKSTKEKAATDKKAKVTKKPKTKTTTDVKK.

This sequence belongs to the bacterial ribosomal protein bS16 family.

The sequence is that of Small ribosomal subunit protein bS16 from Spiroplasma kunkelii.